Here is a 491-residue protein sequence, read N- to C-terminus: Ketol-acid reductoisomerase (NADP(+)) (491 aa).

The KARI N-terminal Rossmann domain occupies 15 to 208 (AQLGKCRFMG…GGHRAGVLES (194 aa)). Residues 45–48 (CGAQ), Arg-68, Arg-76, Ser-78, and 108–110 (DKQ) contribute to the NADP(+) site. Residue His-132 is part of the active site. An NADP(+)-binding site is contributed by Gly-158. 2 consecutive KARI C-terminal knotted domains span residues 209-344 (SFVA…TAPQ) and 345-484 (YEGK…MTDM). Residues Asp-217, Glu-221, Glu-389, and Glu-393 each contribute to the Mg(2+) site. Ser-414 is a substrate binding site.

This sequence belongs to the ketol-acid reductoisomerase family. Requires Mg(2+) as cofactor.

It catalyses the reaction (2R)-2,3-dihydroxy-3-methylbutanoate + NADP(+) = (2S)-2-acetolactate + NADPH + H(+). The enzyme catalyses (2R,3R)-2,3-dihydroxy-3-methylpentanoate + NADP(+) = (S)-2-ethyl-2-hydroxy-3-oxobutanoate + NADPH + H(+). It participates in amino-acid biosynthesis; L-isoleucine biosynthesis; L-isoleucine from 2-oxobutanoate: step 2/4. Its pathway is amino-acid biosynthesis; L-valine biosynthesis; L-valine from pyruvate: step 2/4. Involved in the biosynthesis of branched-chain amino acids (BCAA). Catalyzes an alkyl-migration followed by a ketol-acid reduction of (S)-2-acetolactate (S2AL) to yield (R)-2,3-dihydroxy-isovalerate. In the isomerase reaction, S2AL is rearranged via a Mg-dependent methyl migration to produce 3-hydroxy-3-methyl-2-ketobutyrate (HMKB). In the reductase reaction, this 2-ketoacid undergoes a metal-dependent reduction by NADPH to yield (R)-2,3-dihydroxy-isovalerate. The sequence is that of Ketol-acid reductoisomerase (NADP(+)) from Escherichia coli (strain UTI89 / UPEC).